A 395-amino-acid chain; its full sequence is Argininosuccinate synthase (395 aa).

Residues 9 to 17 and alanine 37 each bind ATP; that span reads AYSGGLDTS. Positions 87 and 92 each coordinate L-citrulline. Glycine 117 serves as a coordination point for ATP. Positions 119, 123, and 124 each coordinate L-aspartate. Asparagine 123 serves as a coordination point for L-citrulline. Arginine 127, serine 173, serine 182, glutamate 258, and tyrosine 270 together coordinate L-citrulline.

The protein belongs to the argininosuccinate synthase family. Type 1 subfamily. Homotetramer.

The protein localises to the cytoplasm. It carries out the reaction L-citrulline + L-aspartate + ATP = 2-(N(omega)-L-arginino)succinate + AMP + diphosphate + H(+). It functions in the pathway amino-acid biosynthesis; L-arginine biosynthesis; L-arginine from L-ornithine and carbamoyl phosphate: step 2/3. The chain is Argininosuccinate synthase from Methanospirillum hungatei JF-1 (strain ATCC 27890 / DSM 864 / NBRC 100397 / JF-1).